Here is a 287-residue protein sequence, read N- to C-terminus: Ribosomal RNA small subunit methyltransferase I (287 aa).

Belongs to the methyltransferase superfamily. RsmI family.

It localises to the cytoplasm. It catalyses the reaction cytidine(1402) in 16S rRNA + S-adenosyl-L-methionine = 2'-O-methylcytidine(1402) in 16S rRNA + S-adenosyl-L-homocysteine + H(+). Functionally, catalyzes the 2'-O-methylation of the ribose of cytidine 1402 (C1402) in 16S rRNA. The polypeptide is Ribosomal RNA small subunit methyltransferase I (Streptococcus pyogenes serotype M18 (strain MGAS8232)).